Consider the following 425-residue polypeptide: RNA polymerase II-associated factor 1 homolog (425 aa).

Positions 152 to 174 (KKNQQVEDMYRDKQSQIDAINKT) form a coiled coil. The interval 331–425 (SRKSKLTLTY…KEPTVDSDSD (95 aa)) is disordered. Basic and acidic residues-rich tracts occupy residues 344-380 (SELE…KEEG) and 393-402 (DKPQKSRSDS).

Belongs to the PAF1 family. Component of the PAF1 complex which consists of at least cdc-73, ctr-9, leo-1, pafo-1 and rtfo-1.

The protein resides in the nucleus. Component of the PAF1 complex which is a multifunctional complex involved in transcription initiation via genetic interactions with TATA-binding proteins, elongation and transcription-coupled histone modification. In Caenorhabditis elegans, this protein is RNA polymerase II-associated factor 1 homolog.